A 496-amino-acid chain; its full sequence is Glutamate--cysteine ligase B, chloroplastic (496 aa).

A chloroplast-targeting transit peptide spans M1–P34. The disordered stretch occupies residues P14–T53. Positions P29–G38 are enriched in low complexity. C160 and C380 are joined by a disulfide.

The protein belongs to the carboxylate-amine ligase family. Glutamate--cysteine ligase type 2 subfamily. As to quaternary structure, homodimer or monomer when oxidized or reduced, respectively. Post-translationally, the Cys-160-Cys-380 disulfide bridge is known to modulate the enzyme activity according to the redox status. The oxidized form constitutes the active enzyme.

Its subcellular location is the plastid. It is found in the chloroplast. It carries out the reaction L-cysteine + L-glutamate + ATP = gamma-L-glutamyl-L-cysteine + ADP + phosphate + H(+). It participates in sulfur metabolism; glutathione biosynthesis; glutathione from L-cysteine and L-glutamate: step 1/2. The chain is Glutamate--cysteine ligase B, chloroplastic (GSH1-2) from Oryza sativa subsp. japonica (Rice).